Reading from the N-terminus, the 208-residue chain is MIKVQTKWLERAQRIRAIAQAGLAFSKDVYDRERYEELMKLSAEMMADYSEKDIEVITDLWQGEKGYPTPKADVRGAVFRENQILLVREKHDELWSLPGGFCEIGLSPAENVVKEIKEESGYDTEPSRLLAVLDSHKHSHPPQPYHYYKIFIACSMTDGQGETGIETNHAAFFPEDRLPPLSPKRNTPSQLSMLFDFLRHPDKKTIFD.

The Nudix hydrolase domain maps to 69-195; that stretch reads TPKADVRGAV…NTPSQLSMLF (127 aa). A Nudix box motif is present at residues 100–121; that stretch reads GFCEIGLSPAENVVKEIKEESG. Positions 115 and 119 each coordinate Mg(2+).

It belongs to the Nudix hydrolase family. Mg(2+) serves as cofactor. Requires Mn(2+) as cofactor.

Its function is as follows. Probably mediates the hydrolysis of some nucleoside diphosphate derivatives. In Bacillus subtilis (strain 168), this protein is Putative ADP-ribose pyrophosphatase YjhB (yjhB).